The following is a 317-amino-acid chain: Osteopontin (317 aa).

A signal peptide spans 1–16 (MRLAVVCFCLFGLASC). 5 positions are modified to phosphoserine: S26, S27, S60, S62, and S63. Positions 43 to 297 (WLKPDPSQKQ…LVLDPKSKED (255 aa)) are disordered. Positions 49–63 (SQKQNLLAPQNSVSS) are enriched in polar residues. T66 bears the Phosphothreonine mark. Phosphoserine occurs at positions 76, 78, 81, 106, 109, 112, 115, and 118. Residues 86–110 (DDDDDDDDDGDHAESEDSVNSDESD) show a composition bias toward acidic residues. Residues T123, T132, and T137 are each glycosylated (O-linked (GalNAc...) threonine). The short motif at 144-146 (RGD) is the Cell attachment site element. 2 positions are modified to phosphothreonine: T170 and T175. The span at 174-187 (LTSRMKSQESDEAI) shows a compositional bias: basic and acidic residues. Residues S176, S180, S200, S204, S209, S213, and S219 each carry the phosphoserine modification. Residues 197 to 216 (SVPSDQDSNGKTSHESSQLD) show a composition bias toward polar residues. S219 is a glycosylation site (O-linked (Xyl...) (chondroitin sulfate) serine). T222 carries the post-translational modification Phosphothreonine. Basic and acidic residues-rich tracts occupy residues 223-240 (HSLEQSKEYKQRASHEST) and 248-263 (SAEKPDAIDSAERSDA). A phosphoserine mark is found at S224, S228, S257, S261, S266, S270, S273, S278, S283, S294, S306, S311, S313, and S314. Positions 273 to 297 (SLEHQSHEFHSHEDKLVLDPKSKED) are enriched in basic and acidic residues. A glycan (O-linked (Xyl...) (chondroitin sulfate) serine) is linked at S311.

Belongs to the osteopontin family. As to quaternary structure, interacts (via N-terminus) with integrin ITGA9:ITGB1. In terms of processing, extensively phosphorylated by FAM20C in the extracellular medium at multiple sites within the S-x-E/pS motif. The phosphorylated form inhibits hydroxyapatite crystallization. Dephosphorylation via a mechanism involving ALPL/TNAP promotes hydroxyapatite crystallization. Post-translationally, O-glycosylated. Forms covalent cross-links mediated by transglutaminase TGM2, between a glutamine and the epsilon-amino group of a lysine residue, forming homopolymers and heteropolymers, increasing its collagen binding properties.

Its subcellular location is the secreted. In terms of biological role, major non-collagenous bone protein that binds tightly to hydroxyapatite. Appears to form an integral part of the mineralized matrix. Probably important to cell-matrix interaction. Acts as a cytokine involved in enhancing production of interferon-gamma and interleukin-12 and reducing production of interleukin-10 and is essential in the pathway that leads to type I immunity. The chain is Osteopontin (Spp1) from Rattus norvegicus (Rat).